The chain runs to 356 residues: Tyrosine recombinase XerS (356 aa).

The region spanning 16–121 (IMPWYVLDYY…ALSSLYKYLT (106 aa)) is the Core-binding (CB) domain. The 186-residue stretch at 169-354 (AFLDYVDKEY…VNDEQKNALD (186 aa)) folds into the Tyr recombinase domain. Active-site residues include Arg-210, Lys-234, His-306, Arg-309, and His-332. Tyr-341 functions as the O-(3'-phospho-DNA)-tyrosine intermediate in the catalytic mechanism.

Belongs to the 'phage' integrase family. XerS subfamily.

It is found in the cytoplasm. With respect to regulation, ftsK is required for recombination. Functionally, site-specific tyrosine recombinase, which acts by catalyzing the cutting and rejoining of the recombining DNA molecules. Essential to convert dimers of the bacterial chromosome into monomers to permit their segregation at cell division. In Streptococcus pyogenes serotype M49 (strain NZ131), this protein is Tyrosine recombinase XerS.